We begin with the raw amino-acid sequence, 248 residues long: 14-3-3 protein (248 aa).

2 coiled-coil regions span residues methionine 13–isoleucine 33 and arginine 91–glutamate 111. Arginine 135–tyrosine 136 is an O-phospho-L-serine binding site. The residue at position 214 (threonine 214) is a Phosphothreonine. Residues threonine 237–lysine 248 carry the Putative polyglycylation target motif (T/G)X0-1(D/E)X1-3-G(D/E)X1-2(gE)2-4, where X is polar or negatively charged amino acid, and gE is polyglycylated glutamine motif. The residue at position 246 (glutamate 246) is a 5-glutamyl polyglycine.

The protein belongs to the 14-3-3 family. Homodimer. Homodimerizes via N-terminal domains. Oligomerizes forming homotrimers, homotetramers and protein filaments. Oligomerization is hindered by polyglycylation in vivo. Interacts with a large number of both cytosolic and membrane proteins in trophozoites and encysting parasites. Interacts with a serine/threonine protein kinase GL50803_112076 (gCDC7). Component of a multiprotein complex containing gCDC7 and GL50803_94117 (gDBF4), a regulatory subunit of gCDC7, during both the trophozoite and encysting stages of the parasite. Interacts with fructose-bisphosphate aldolase GL50803_11043 (gFBA), pyruvate kinase GL50803_17143 (gPyk), acetyl-CoA synthetase GL50803_13608 (gACS), protein kinase GL50803_22165 (gSTE), DEAD box RNA helicase GL50803_34684 (gVASA) and Golgi/cell cycle associated protein GL50803_17472 (gGCCA). Interacts with actin. Interacts with both monomeric phosphorylated and unphosphorylated actin. The interaction is enhanced by phosphorylation of actin and inhibited by Rho GTPase Rac. Phosphorylated constitutively throughout the life cycle. Phosphorylation is very high in trophozoites and encysting cells of 12 hours. Phosphorylated during excystation. Phosphorylation promotes its binding to various target proteins and is critical for encystation process. Phosphorylation modification is not influenced by polyglycylation modification. Post-translationally, polyglycylated on a glutamate residue, resulting in polyglycine chain on the gamma-carboxyl group. Polyglycylated by the tubulin--tyrosine ligase-like protein GL50803_8456 (gTTLL3). The polyglycine chain is shortened by metallopeptidases of the M20 family, namely dipeptidases GL50803_15832 (gDIP1) and GL50803_8407 (gDIP2). The length of the polyglycine chain is developmental stage-dependent. In trophozoites, glycine residues range from 10 to 31, with the greatest occurrence of 21 residues. In 12 hour encystation stage, glycine residues range from 6 to 22, with the greatest occurrence of 10 residues. The differential rate of polyglycylation/deglycylation during the encystation process regulates the intracellular localization of this protein. Relocalizes partially from the cytoplasm inside the nuclei following the shortening of the polyglycine chain in encysting cells. Polyglycylation modification is not influenced by phosphorylation modification. Polyglycylation prevents oligomerization in vivo.

It localises to the cytoplasm. The protein localises to the cytoskeleton. It is found in the nucleus. The protein resides in the cell projection. Its subcellular location is the cilium. It localises to the flagellum. The protein localises to the spindle. It is found in the nucleus envelope. The protein resides in the endoplasmic reticulum. Its function is as follows. Adapter protein implicated in the regulation of a large spectrum of both general and specialized signaling pathways. Binds to a large number of partners, usually by recognition of a phosphoserine or phosphothreonine motif. Binding generally results in the modulation of the activity of the binding partner. Binds with varying affinity to various synthetic phosphopeptides having a consensus binding motif RSX(pS/pT)XP, called mode-1, where X is any residue and pS/pT is a phosphorylated serine/threonine, and to synthetic phosphopeptides having a consensus binding motif Xp(S/T)X1-2-COOH, called mode-3, in which the phosphorylated residue occupies the penultimate C-terminal position in the target protein, but does not bind to their unphosphorylated counterparts. Binds to synthetic human RAF1 phosphopeptides, but not to their unphosphorylated forms. Binds to difopein, a polypeptide containing a phosphorylation-independent binding motif. Involved in encystation. Involved in cell proliferation. Required for actin and tubulin cytoskeletal organization. Regulates actin filament formation and nuclear size. This Giardia intestinalis (strain ATCC 50803 / WB clone C6) (Giardia lamblia) protein is 14-3-3 protein.